A 43-amino-acid chain; its full sequence is Protein PsbN (43 aa).

Residues 5–27 (TLIAISISGLIVSFTGYALYTAF) traverse the membrane as a helical segment.

This sequence belongs to the PsbN family.

The protein resides in the plastid. It localises to the chloroplast thylakoid membrane. Functionally, may play a role in photosystem I and II biogenesis. The protein is Protein PsbN of Cicer arietinum (Chickpea).